The following is a 235-amino-acid chain: Attacin-E (235 aa).

A signal peptide spans 1 to 19; that stretch reads MFGKIVFLLLVALCAGVQS. A propeptide spanning residues 20 to 47 is cleaved from the precursor; it reads RYLIVSEPVYYIEHYEEPELLASSRVRR.

This sequence belongs to the attacin/sarcotoxin-2 family. In terms of processing, attacin F appears to be derived by proteolytic digestion of attacin E.

The protein localises to the secreted. Its function is as follows. Hemolymph antibacterial protein. The protein is Attacin-E of Hyalophora cecropia (Cecropia moth).